The primary structure comprises 619 residues: Zinc finger protein 668 (619 aa).

N-acetylmethionine is present on M1. S10 is subject to Phosphoserine. Residues 22 to 44 form a C2H2-type 1 zinc finger; that stretch reads YKCLSCTKTFPNAPRAARHAATH. Residues 34–79 are disordered; the sequence is APRAARHAATHGPADCSEEVAEVKPKPETEAKAEEASGEKVSGSAA. Positions 54-71 are enriched in basic and acidic residues; that stretch reads AEVKPKPETEAKAEEASG. Residues K57, K59, K65, and K80 each participate in a glycyl lysine isopeptide (Lys-Gly) (interchain with G-Cter in SUMO2) cross-link. C2H2-type zinc fingers lie at residues 84 to 106, 112 to 134, 140 to 162, 168 to 190, 196 to 218, 224 to 246, 252 to 274, 280 to 302, 308 to 330, 336 to 358, and 364 to 386; these read YACP…GRSH, FPCP…LASH, FRCA…QRGH, YACA…RRTH, YSCE…ERSH, FLCS…QRIH, YRCP…ERTH, FLCP…QRAH, YHCE…RRVH, FKCL…ALVH, and FRCE…SRVH. K154 participates in a covalent cross-link: Glycyl lysine isopeptide (Lys-Gly) (interchain with G-Cter in SUMO2). S387 is subject to Phosphoserine. A C2H2-type 13 zinc finger spans residues 392 to 414; sequence FHCNACGKSFVVSSSLRKHERTH. The disordered stretch occupies residues 492–513; the sequence is REAPGPLEGAGEAGGEEADEKP. K512 participates in a covalent cross-link: Glycyl lysine isopeptide (Lys-Gly) (interchain with G-Cter in SUMO2). 3 C2H2-type zinc fingers span residues 516–538, 544–566, and 572–594; these read FVCR…ERSH, FPCT…SRTH, and YTCP…ERTH.

The protein belongs to the krueppel C2H2-type zinc-finger protein family.

It localises to the nucleus. In terms of biological role, may be involved in transcriptional regulation. May play a role in DNA repair process. The protein is Zinc finger protein 668 (ZNF668) of Homo sapiens (Human).